The chain runs to 227 residues: Large ribosomal subunit protein uL3 (227 aa).

Positions 146-167 (RGPMAHGSKFHRHQGSNGACSS) are disordered.

This sequence belongs to the universal ribosomal protein uL3 family. Part of the 50S ribosomal subunit. Forms a cluster with proteins L14 and L19.

Functionally, one of the primary rRNA binding proteins, it binds directly near the 3'-end of the 23S rRNA, where it nucleates assembly of the 50S subunit. The chain is Large ribosomal subunit protein uL3 from Agathobacter rectalis (strain ATCC 33656 / DSM 3377 / JCM 17463 / KCTC 5835 / VPI 0990) (Eubacterium rectale).